The sequence spans 795 residues: Phenylalanine--tRNA ligase beta subunit (795 aa).

Residues Ala39 to Arg148 form the tRNA-binding domain. The B5 domain maps to Pro401 to Asp476. Residues Asp454, Asp460, Glu463, and Glu464 each coordinate Mg(2+). Positions Ser701–Arg794 constitute an FDX-ACB domain.

It belongs to the phenylalanyl-tRNA synthetase beta subunit family. Type 1 subfamily. As to quaternary structure, tetramer of two alpha and two beta subunits. Mg(2+) is required as a cofactor.

Its subcellular location is the cytoplasm. The enzyme catalyses tRNA(Phe) + L-phenylalanine + ATP = L-phenylalanyl-tRNA(Phe) + AMP + diphosphate + H(+). This Shigella boydii serotype 4 (strain Sb227) protein is Phenylalanine--tRNA ligase beta subunit.